The following is an 803-amino-acid chain: Na(+)/H(+) antiporter subunit A1 (803 aa).

19 helical membrane-spanning segments follow: residues 1–21 (MSLLHIAVILPLIFALIIPIL), 30–50 (LGWFVLPIPVVLFIYFLSLIS), 79–99 (LSILFSLLITGIGSLVVLYSI), 117–137 (LFMGAMLGVVLSDNLIILYLF), 166–186 (LIITVFGGLSLLGGFILISLA), 208–228 (FIFAMVLIMLGAFTKSAQVPF), 265–285 (LFAISQGWIWTITLVGLITLF), 300–320 (ILAFSTVSQLGMIMSMLGIGA), 337–357 (FTAAVFHLVNHATFKGALFMI), 377–397 (LTIMPISFTITVITALSMAGI), 427–447 (LGIVFPILAIVGSIFTFVYSI), 472–492 (ILMLLSPIILAVLVVVFGLFP), 522–542 (GITPAFISTLIIWILGILLLL), 591–611 (LVIIFGMLIVVTIVTLLSVPF), 621–641 (IHIYEIAILILLIIAAFMVVI), 646–666 (LFSVIMLGVVGYSVSVLFVFF), 671–691 (LALTQFVVESISTALFLLCFY), 707–727 (LTNALISIGVGLVVIILGLIA), and 764–784 (MDTLFESSVLGIAGLGVYTMI).

It belongs to the CPA3 antiporters (TC 2.A.63) subunit A family. May form a heterooligomeric complex that consists of seven subunits: mnhA1, mnhB1, mnhC1, mnhD1, mnhE1, mnhF1 and mnhG1.

It localises to the cell membrane. In terms of biological role, mnh complex is a Na(+)/H(+) antiporter involved in Na(+) excretion. In Staphylococcus haemolyticus (strain JCSC1435), this protein is Na(+)/H(+) antiporter subunit A1 (mnhA1).